A 318-amino-acid polypeptide reads, in one-letter code: NADH-ubiquinone oxidoreductase chain 1 (318 aa).

9 consecutive transmembrane segments (helical) span residues 2–22 (FLTNISCLIIPILLAVAFLTL), 36–56 (GPNIVGPYGLLQPIADAIKLF), 69–89 (LLFTIAPTLALSLALTLWIPL), 100–120 (LGMLFILAMSSLAVYSILWSG), 130–152 (IGALRAVAQTISYEVTLAIILLH), 171–191 (HIWLIIPSWPLTMMWFISTLA), 217–237 (AGPFALFFLAEYANIMMMNAL), 254–273 (LYSTNFMLKTTMLTISFLWI), and 294–314 (LPLTLALCMWHTSLLISLTSI).

It belongs to the complex I subunit 1 family.

It is found in the mitochondrion inner membrane. The enzyme catalyses a ubiquinone + NADH + 5 H(+)(in) = a ubiquinol + NAD(+) + 4 H(+)(out). Its function is as follows. Core subunit of the mitochondrial membrane respiratory chain NADH dehydrogenase (Complex I) that is believed to belong to the minimal assembly required for catalysis. Complex I functions in the transfer of electrons from NADH to the respiratory chain. The immediate electron acceptor for the enzyme is believed to be ubiquinone. The polypeptide is NADH-ubiquinone oxidoreductase chain 1 (MT-ND1) (Cyclopes didactylus (Silky anteater)).